The chain runs to 174 residues: Late lactation protein B (174 aa).

Residues 1–18 (MKVLFLTIALSLFSILQA) form the signal peptide. A disulfide bridge connects residues Cys77 and Cys169.

The protein belongs to the calycin superfamily. Lipocalin family. As to expression, mammary gland specific. Secreted in milk.

The protein resides in the secreted. Functionally, probably serves a role in the transport of a small ligand released during the hydrolysis of milk fat. The polypeptide is Late lactation protein B (LLPB) (Notamacropus eugenii (Tammar wallaby)).